The primary structure comprises 437 residues: MSDKVIIIGGGLAGSEAAWQAARRGMKVELWEMRPGKLTPAHSTGYLAELVCSNSLRADSLENAAGLLKAEMRQAGSLIMEVAAACRVPAGKALAVDREEFASRVTAILEAHPGITVIREEVQAIPDNGPVIIATGPLTSPAMVRALKEFTGAEYLYFYDAAAPIVTAESLDYSRIFKGSRYGRGEDDYLNCPLNKEEYEAFYQALVTAERHPRHEFEPEVVFEGCMPVEVMAARGPDTLRFGPMRPVGLIDPATGREPYAVVQLRQDNAAGTLYNLVGFQTSLKWGEQERVFRLIPGLREAEFVRFGVMHRNTYVNSPRLLQPTLQVKGYPWLFLAGQLTGVEGYIESAACGLVAGVNATRFARGEEPLIPPPATAHGALLHYITDPTHTPFQPMHINYGLLPPLEHRVKNRVERNRILAARALEIWNSSGEFSGN.

9 to 14 (GGGLAG) serves as a coordination point for FAD.

The protein belongs to the MnmG family. TrmFO subfamily. FAD serves as cofactor.

Its subcellular location is the cytoplasm. The catalysed reaction is uridine(54) in tRNA + (6R)-5,10-methylene-5,6,7,8-tetrahydrofolate + NADH + H(+) = 5-methyluridine(54) in tRNA + (6S)-5,6,7,8-tetrahydrofolate + NAD(+). It carries out the reaction uridine(54) in tRNA + (6R)-5,10-methylene-5,6,7,8-tetrahydrofolate + NADPH + H(+) = 5-methyluridine(54) in tRNA + (6S)-5,6,7,8-tetrahydrofolate + NADP(+). Its function is as follows. Catalyzes the folate-dependent formation of 5-methyl-uridine at position 54 (M-5-U54) in all tRNAs. This is Methylenetetrahydrofolate--tRNA-(uracil-5-)-methyltransferase TrmFO from Moorella thermoacetica (strain ATCC 39073 / JCM 9320).